A 385-amino-acid polypeptide reads, in one-letter code: Protein pelota homolog (385 aa).

This sequence belongs to the eukaryotic release factor 1 family. Pelota subfamily. As to quaternary structure, component of the Pelota-HBS1L complex, also named Dom34-Hbs1 complex, composed of PELO and HBS1L. Requires a divalent metal cation as cofactor.

The protein resides in the cytoplasm. In terms of biological role, component of the Pelota-HBS1L complex, a complex that recognizes stalled ribosomes and triggers the No-Go Decay (NGD) pathway. In the Pelota-HBS1L complex, PELO recognizes ribosomes stalled at the 3' end of an mRNA and engages stalled ribosomes by destabilizing mRNA in the mRNA channel. Following mRNA extraction from stalled ribosomes by the SKI complex, the Pelota-HBS1L complex promotes recruitment of ABCE1, which drives the disassembly of stalled ribosomes, followed by degradation of damaged mRNAs as part of the NGD pathway. In Danio rerio (Zebrafish), this protein is Protein pelota homolog (pelo).